Reading from the N-terminus, the 624-residue chain is Ubiquilin-2 (624 aa).

Disordered regions lie at residues 1–32 and 106–141; these read MAEN…EPKI and NRPQ…TNSN. Ala2 carries the N-acetylalanine modification. A compositionally biased stretch (low complexity) spans 15–32; that stretch reads RGPAAAQGSAAAPAEPKI. The Ubiquitin-like domain occupies 33–107; it reads IKVTVKTPKE…VHLVIKSQNR (75 aa). Positions 106-115 are enriched in polar residues; that stretch reads NRPQGQSTQP. Residues 116–141 show a composition bias toward low complexity; that stretch reads SNAAGTNTTSASTPRSNSTPISTNSN. 2 STI1 domains span residues 178–206 and 208–247; these read SPEM…QLIM and NPQM…MQEM. A disordered region spans residues 287-349; that stretch reads FGGNPFASVG…SGSGNSSSNA (63 aa). The segment covering 294–304 has biased composition (low complexity); the sequence is SVGSSSSSGEG. A compositionally biased stretch (pro residues) spans 316–325; it reads LPNPWAPPPA. The segment covering 326-349 has biased composition (low complexity); that stretch reads TQSSATTSTTTSTGSGSGNSSSNA. STI1 domains follow at residues 379–426 and 430–462; these read NPQL…QEQM and LPAF…QQGL. 12 repeat units span residues 491 to 493, 494 to 496, 497 to 499, 500 to 502, 503 to 505, 506 to 508, 509 to 511, 512 to 514, 515 to 517, 518 to 520, 521 to 523, and 524 to 526. The segment at 491 to 526 is 12 X 3 AA tandem repeats of P-X-X; the sequence is PVGPVTPIGPIGPIVPFTPIGPIGPIGPTGPAAPPG. The interval 512-556 is disordered; sequence PIGPIGPTGPAAPPGSTGSGGPTGPTVSSAAPSETTSPTSESGPN. Over residues 535-553 the composition is skewed to low complexity; sequence GPTVSSAAPSETTSPTSES. Residues 581–621 enclose the UBA domain; sequence RFQQQLEQLNAMGFLNREANLQALIATGGDINAAIERLLGS.

Homodimer. Forms heterodimer with UBQLN1. Binds UBE3A and BTRC. Interacts with the 19S proteasome subunit. Interacts with C9orf72. Interacts with HNRNPA1 and HNRNPU. Found in a complex with UBQLN1 and MAP1LC3A/B/C. Interacts with EPS15, EPN1 and EPN2. Interacts with HERPUD1. Interacts with RAD23A. Interacts with TARDBP. Interacts (via C-terminus) with FAF2 (via N-terminus). Interacts with UBQLN4. Binds CD47. In terms of processing, degraded during macroautophagy.

It is found in the cytoplasm. The protein resides in the nucleus. It localises to the membrane. Its subcellular location is the cytoplasmic vesicle. The protein localises to the autophagosome. Functionally, plays an important role in the regulation of different protein degradation mechanisms and pathways including ubiquitin-proteasome system (UPS), autophagy and the endoplasmic reticulum-associated protein degradation (ERAD) pathway. Mediates the proteasomal targeting of misfolded or accumulated proteins for degradation by binding (via UBA domain) to their polyubiquitin chains and by interacting (via ubiquitin-like domain) with the subunits of the proteasome. Plays a role in the ERAD pathway via its interaction with ER-localized proteins FAF2/UBXD8 and HERPUD1 and may form a link between the polyubiquitinated ERAD substrates and the proteasome. Involved in the regulation of macroautophagy and autophagosome formation; required for maturation of autophagy-related protein LC3 from the cytosolic form LC3-I to the membrane-bound form LC3-II and may assist in the maturation of autophagosomes to autolysosomes by mediating autophagosome-lysosome fusion. Negatively regulates the endocytosis of GPCR receptors: AVPR2 and ADRB2, by specifically reducing the rate at which receptor-arrestin complexes concentrate in clathrin-coated pits (CCPs). This chain is Ubiquilin-2 (UBQLN2), found in Homo sapiens (Human).